The following is an 80-amino-acid chain: UPF0346 protein LSEI_1394 (80 aa).

This sequence belongs to the UPF0346 family.

The polypeptide is UPF0346 protein LSEI_1394 (Lacticaseibacillus paracasei (strain ATCC 334 / BCRC 17002 / CCUG 31169 / CIP 107868 / KCTC 3260 / NRRL B-441) (Lactobacillus paracasei)).